The primary structure comprises 284 residues: Pantothenate synthetase (284 aa).

ATP is bound at residue 30–37 (MGFLHEGH). Residue His37 is the Proton donor of the active site. Residue Gln61 participates in (R)-pantoate binding. Gln61 contributes to the beta-alanine binding site. 147–150 (GRKD) provides a ligand contact to ATP. A (R)-pantoate-binding site is contributed by Gln153. Residues Val176 and 184 to 187 (MSSR) contribute to the ATP site.

This sequence belongs to the pantothenate synthetase family. Homodimer.

It is found in the cytoplasm. The catalysed reaction is (R)-pantoate + beta-alanine + ATP = (R)-pantothenate + AMP + diphosphate + H(+). Its pathway is cofactor biosynthesis; (R)-pantothenate biosynthesis; (R)-pantothenate from (R)-pantoate and beta-alanine: step 1/1. Catalyzes the condensation of pantoate with beta-alanine in an ATP-dependent reaction via a pantoyl-adenylate intermediate. This is Pantothenate synthetase from Pelobacter propionicus (strain DSM 2379 / NBRC 103807 / OttBd1).